Consider the following 232-residue polypeptide: Zinc-finger homeodomain protein 5 (232 aa).

The segment covering 1–11 (MELSEHEEDAG) has biased composition (acidic residues). Positions 1-25 (MELSEHEEDAGDVGGGCSSPPTPPH) are disordered. The ZF-HD dimerization-type; degenerate zinc-finger motif lies at 40 to 86 (YHECLRNHAAASGGHVVDGCGEFMPASTEEPLACAACGCHRSFHRRD). Residues 126-170 (GLPFPGYGTPSGGTGTTTASSSDERLRPSPVQPRRRSRTTFTREQ) are disordered. Residues 159 to 222 (RRRSRTTFTR…NNKHSFKQKQ (64 aa)) constitute a DNA-binding region (homeobox).

In terms of assembly, homo- and heterodimer with other ZFHD proteins.

The protein resides in the nucleus. In terms of biological role, putative transcription factor. This Oryza sativa subsp. japonica (Rice) protein is Zinc-finger homeodomain protein 5 (ZHD5).